A 111-amino-acid polypeptide reads, in one-letter code: uncharacterized protein (111 aa).

The HIT domain occupies I4–A111. Positions H96–H100 match the Histidine triad motif motif.

This is an uncharacterized protein from Chlamydia trachomatis serovar D (strain ATCC VR-885 / DSM 19411 / UW-3/Cx).